The chain runs to 142 residues: Anti-sigma F factor (142 aa).

Belongs to the anti-sigma-factor family.

The catalysed reaction is L-seryl-[protein] + ATP = O-phospho-L-seryl-[protein] + ADP + H(+). The enzyme catalyses L-threonyl-[protein] + ATP = O-phospho-L-threonyl-[protein] + ADP + H(+). Binds to sigma F and blocks its ability to form an RNA polymerase holoenzyme (E-sigma F). Phosphorylates SpoIIAA on a serine residue. This phosphorylation may enable SpoIIAA to act as an anti-anti-sigma factor that counteracts SpoIIAB and thus releases sigma F from inhibition. In Clostridium kluyveri (strain NBRC 12016), this protein is Anti-sigma F factor.